A 320-amino-acid chain; its full sequence is Cytochrome f (320 aa).

The N-terminal stretch at M1–A35 is a signal peptide. 4 residues coordinate heme: Y36, C56, C59, and H60. The chain crosses the membrane as a helical span at residues V286–K306.

The protein belongs to the cytochrome f family. In terms of assembly, the 4 large subunits of the cytochrome b6-f complex are cytochrome b6, subunit IV (17 kDa polypeptide, petD), cytochrome f and the Rieske protein, while the 4 small subunits are PetG, PetL, PetM and PetN. The complex functions as a dimer. Heme is required as a cofactor.

It is found in the plastid. It localises to the chloroplast thylakoid membrane. In terms of biological role, component of the cytochrome b6-f complex, which mediates electron transfer between photosystem II (PSII) and photosystem I (PSI), cyclic electron flow around PSI, and state transitions. In Eucalyptus globulus subsp. globulus (Tasmanian blue gum), this protein is Cytochrome f.